Reading from the N-terminus, the 2788-residue chain is Multiple epidermal growth factor-like domains protein 8 (2788 aa).

The signal sequence occupies residues 1–27 (MALGGALAAALALAFAVLGPLSHKVLA). The Extracellular segment spans residues 28 to 2590 (GDCKGQRQVL…FFRQDQAHID (2563 aa)). 6 cysteine pairs are disulfide-bonded: Cys30–Cys57, Cys142–Cys152, Cys146–Cys158, Cys174–Cys184, Cys178–Cys191, and Cys193–Cys202. In terms of domain architecture, CUB 1 spans 30 to 140 (CKGQRQVLRE…LGFNASFRFS (111 aa)). Asn50 carries an N-linked (GlcNAc...) asparagine glycan. EGF-like domains lie at 138–168 (RFSL…GGPD) and 170–203 (GLQE…RACD). Kelch repeat units follow at residues 241-287 (LLAV…AVAW), 290-338 (FLVL…AGHA), 346-399 (WLYV…FHAP), 402-453 (TLLV…FHTA), 459-511 (YMVV…APPS), and 525-575 (VLLV…SRDP). PSI domains are found at residues 561–613 (YCSM…SDCQ), 847–899 (ACSS…ALCP), and 900–947 (LCEE…EECP). An N-linked (GlcNAc...) asparagine glycan is attached at Asn1048. Residues 1074 to 1115 (DVDECRLGLARCHPRATCLNTPLSYECHCQRGYQGDGITHCN) enclose the EGF-like 3; calcium-binding domain. 16 disulfide bridges follow: Cys1078-Cys1091, Cys1085-Cys1100, Cys1102-Cys1114, Cys1163-Cys1171, Cys1165-Cys1179, Cys1182-Cys1191, Cys1194-Cys1208, Cys1211-Cys1224, Cys1213-Cys1231, Cys1233-Cys1242, Cys1245-Cys1259, Cys1263-Cys1302, Cys1336-Cys1367, Cys1407-Cys1421, Cys1415-Cys1433, and Cys1435-Cys1444. Laminin EGF-like domains follow at residues 1163–1210 (CGCN…GCRP) and 1211–1261 (CQCN…SCFR). The CUB 2 domain occupies 1263–1405 (CGGRALLTNV…WGFNASVGSA (143 aa)). N-linked (GlcNAc...) asparagine glycosylation is present at Asn1271. Thr1353 carries the phosphothreonine modification. Residues 1403–1445 (GSARCGSGGPGSCPVPQECVPQDGAAGAGLCRCPQGWAGPHCR) form the EGF-like 4 domain. Kelch repeat units lie at residues 1522–1570 (TLWM…SFHA), 1580–1626 (AMYL…HTLT), 1632–1678 (SLLL…SAVY), 1684–1734 (SLYV…HASA), 1739–1786 (TMVV…ESVA), and 1795–1840 (RLYI…WCHG). 4 PSI domains span residues 1819–1859 (PCRL…PPCS), 1867–1922 (ECRR…NDCR), 2003–2061 (PCHL…ESCS), and 2063–2120 (GCAQ…LSCP). Residue Asn2009 is glycosylated (N-linked (GlcNAc...) asparagine). An EGF-like 5 domain is found at 2121-2159 (PEDECANGHHDCNETQNCHDQPHGYECSCKTGYTMDNVT). 2 disulfides stabilise this stretch: Cys2125–Cys2138 and Cys2132–Cys2147. 2 N-linked (GlcNAc...) asparagine glycosylation sites follow: Asn2157 and Asn2172. Intrachain disulfides connect Cys2196–Cys2204, Cys2198–Cys2213, Cys2216–Cys2225, and Cys2228–Cys2242. Laminin EGF-like domains follow at residues 2196-2244 (CRCN…TCRP) and 2323-2386 (CQCN…QCYR). The disordered stretch occupies residues 2465-2507 (HTVHIQPPPPPPPPPPPADGVPRVASDLGGLGTGSGSGSPVEP). A compositionally biased stretch (pro residues) spans 2470–2483 (QPPPPPPPPPPPAD). Residues 2591-2611 (LFVFFSVFFSCFFLFLSLCVL) traverse the membrane as a helical segment. At 2612–2788 (LWKAKQALDQ…SQDNLTSMSL (177 aa)) the chain is on the cytoplasmic side. Over residues 2761–2775 (GGAGGSGHGGGGGRK) the composition is skewed to gly residues. Residues 2761 to 2788 (GGAGGSGHGGGGGRKGLLSQDNLTSMSL) form a disordered region. The span at 2779-2788 (SQDNLTSMSL) shows a compositional bias: polar residues.

In terms of tissue distribution, expressed in brain.

It localises to the membrane. In terms of biological role, acts as a negative regulator of hedgehog signaling. This Rattus norvegicus (Rat) protein is Multiple epidermal growth factor-like domains protein 8 (Megf8).